A 174-amino-acid chain; its full sequence is Shikimate kinase 2 (174 aa).

ATP is bound at residue 12-17 (GCGKTT). 2 residues coordinate Mg(2+): Thr-16 and Asp-32. 3 residues coordinate substrate: Asp-34, Arg-58, and Gly-79. The tract at residues 112–126 (EAFPEEGQRPTLTGK) is LID domain. An ATP-binding site is contributed by Arg-120. Arg-139 lines the substrate pocket. Gln-155 provides a ligand contact to ATP.

The protein belongs to the shikimate kinase family. AroL subfamily. In terms of assembly, monomer. Requires Mg(2+) as cofactor.

Its subcellular location is the cytoplasm. The catalysed reaction is shikimate + ATP = 3-phosphoshikimate + ADP + H(+). The protein operates within metabolic intermediate biosynthesis; chorismate biosynthesis; chorismate from D-erythrose 4-phosphate and phosphoenolpyruvate: step 5/7. Its function is as follows. Catalyzes the specific phosphorylation of the 3-hydroxyl group of shikimic acid using ATP as a cosubstrate. This is Shikimate kinase 2 from Enterobacter sp. (strain 638).